The sequence spans 728 residues: Cytosolic endo-beta-N-acetylglucosaminidase (728 aa).

Residues 287–381 (QNRVFFDACD…NFLLNEDKFW (95 aa)) enclose the BRCT domain.

Belongs to the glycosyl hydrolase 85 family.

The protein resides in the cytoplasm. It localises to the cytosol. The enzyme catalyses an N(4)-(oligosaccharide-(1-&gt;3)-[oligosaccharide-(1-&gt;6)]-beta-D-Man-(1-&gt;4)-beta-D-GlcNAc-(1-&gt;4)-alpha-D-GlcNAc)-L-asparaginyl-[protein] + H2O = an oligosaccharide-(1-&gt;3)-[oligosaccharide-(1-&gt;6)]-beta-D-Man-(1-&gt;4)-D-GlcNAc + N(4)-(N-acetyl-beta-D-glucosaminyl)-L-asparaginyl-[protein]. In terms of biological role, endoglycosidase that releases N-glycans from glycoproteins by cleaving the beta-1,4-glycosidic bond in the N,N'-diacetylchitobiose core. Involved in the processing of free oligosaccharides in the cytosol. The protein is Cytosolic endo-beta-N-acetylglucosaminidase (ENGASE) of Gallus gallus (Chicken).